Here is a 285-residue protein sequence, read N- to C-terminus: Bifunctional protein FolD (285 aa).

NADP(+) is bound by residues 165–167 (GRS) and Ser-190.

This sequence belongs to the tetrahydrofolate dehydrogenase/cyclohydrolase family. Homodimer.

The catalysed reaction is (6R)-5,10-methylene-5,6,7,8-tetrahydrofolate + NADP(+) = (6R)-5,10-methenyltetrahydrofolate + NADPH. The enzyme catalyses (6R)-5,10-methenyltetrahydrofolate + H2O = (6R)-10-formyltetrahydrofolate + H(+). The protein operates within one-carbon metabolism; tetrahydrofolate interconversion. Catalyzes the oxidation of 5,10-methylenetetrahydrofolate to 5,10-methenyltetrahydrofolate and then the hydrolysis of 5,10-methenyltetrahydrofolate to 10-formyltetrahydrofolate. In Burkholderia mallei (strain NCTC 10247), this protein is Bifunctional protein FolD.